A 544-amino-acid chain; its full sequence is DNA mismatch repair protein MutL (544 aa).

Belongs to the DNA mismatch repair MutL/HexB family.

This protein is involved in the repair of mismatches in DNA. It is required for dam-dependent methyl-directed DNA mismatch repair. May act as a 'molecular matchmaker', a protein that promotes the formation of a stable complex between two or more DNA-binding proteins in an ATP-dependent manner without itself being part of a final effector complex. This is DNA mismatch repair protein MutL from Thermodesulfovibrio yellowstonii (strain ATCC 51303 / DSM 11347 / YP87).